A 207-amino-acid polypeptide reads, in one-letter code: Ribosomal RNA large subunit methyltransferase E (207 aa).

Residues Gly61, Trp63, Asp81, Asp97, and Asp122 each coordinate S-adenosyl-L-methionine. The active-site Proton acceptor is the Lys162.

This sequence belongs to the class I-like SAM-binding methyltransferase superfamily. RNA methyltransferase RlmE family.

It localises to the cytoplasm. It catalyses the reaction uridine(2552) in 23S rRNA + S-adenosyl-L-methionine = 2'-O-methyluridine(2552) in 23S rRNA + S-adenosyl-L-homocysteine + H(+). Specifically methylates the uridine in position 2552 of 23S rRNA at the 2'-O position of the ribose in the fully assembled 50S ribosomal subunit. The protein is Ribosomal RNA large subunit methyltransferase E of Pseudomonas putida (strain ATCC 700007 / DSM 6899 / JCM 31910 / BCRC 17059 / LMG 24140 / F1).